The following is a 461-amino-acid chain: Fumarate hydratase class II (461 aa).

Substrate-binding positions include 97 to 99 (SGT), 127 to 130 (HPND), 137 to 139 (SSN), and Thr-185. His-186 functions as the Proton donor/acceptor in the catalytic mechanism. The active site involves Ser-316. Substrate contacts are provided by residues Ser-317 and 322-324 (KVN).

Belongs to the class-II fumarase/aspartase family. Fumarase subfamily. In terms of assembly, homotetramer.

It localises to the cytoplasm. The enzyme catalyses (S)-malate = fumarate + H2O. It participates in carbohydrate metabolism; tricarboxylic acid cycle; (S)-malate from fumarate: step 1/1. Its function is as follows. Involved in the TCA cycle. Catalyzes the stereospecific interconversion of fumarate to L-malate. This Staphylococcus aureus (strain MSSA476) protein is Fumarate hydratase class II.